Here is a 612-residue protein sequence, read N- to C-terminus: Kelch repeat and BTB domain-containing protein 3 (612 aa).

The region spanning 52–119 is the BTB domain; that stretch reads YDFKIIMKDE…AYTGKTKITD (68 aa). The 101-residue stretch at 150–250 folds into the BACK domain; the sequence is NLVNCLQLLS…VRLHQLSEET (101 aa). Kelch repeat units follow at residues 291–337, 339–390, 400–450, 452–502, and 548–595; these read STTE…GSSL, SYGE…STMK, MALD…PEAS, CQNV…ATLI, and GIED…FYCQ.

The polypeptide is Kelch repeat and BTB domain-containing protein 3 (Pongo abelii (Sumatran orangutan)).